Consider the following 339-residue polypeptide: Anthranilate phosphoribosyltransferase (339 aa).

5-phospho-alpha-D-ribose 1-diphosphate-binding positions include G80, 83–84 (GD), T88, 90–93 (NIST), 108–116 (KHGNRSVSS), and S120. G80 is a binding site for anthranilate. S92 provides a ligand contact to Mg(2+). N111 contributes to the anthranilate binding site. R166 serves as a coordination point for anthranilate. 2 residues coordinate Mg(2+): D225 and E226.

The protein belongs to the anthranilate phosphoribosyltransferase family. In terms of assembly, homodimer. Requires Mg(2+) as cofactor.

The catalysed reaction is N-(5-phospho-beta-D-ribosyl)anthranilate + diphosphate = 5-phospho-alpha-D-ribose 1-diphosphate + anthranilate. It functions in the pathway amino-acid biosynthesis; L-tryptophan biosynthesis; L-tryptophan from chorismate: step 2/5. In terms of biological role, catalyzes the transfer of the phosphoribosyl group of 5-phosphorylribose-1-pyrophosphate (PRPP) to anthranilate to yield N-(5'-phosphoribosyl)-anthranilate (PRA). The protein is Anthranilate phosphoribosyltransferase of Moorella thermoacetica (strain ATCC 39073 / JCM 9320).